The chain runs to 383 residues: Adaptive-response sensory kinase SasA (383 aa).

The Histidine kinase domain maps to 161–383; the sequence is MLAHDLRSPL…SFHFTLPVYR (223 aa). His164 carries the phosphohistidine; by autocatalysis modification.

In terms of assembly, homooligomerizes. Interacts with KaiC1. Interacts with KaiC1 and RpaA. Binds to the B-loop in the CI domain of KaiC; SasA and KaiB compete to bind to the CI domain.

It catalyses the reaction ATP + protein L-histidine = ADP + protein N-phospho-L-histidine.. Member of the two-component regulatory system SasA/RpaA involved in genome-wide circadian gene expression. One of several clock output pathways. Participates in the Kai clock protein complex, the main circadian regulator in cyanobacteria, via its interaction with KaiC. KaiC enhances the autophosphorylation activity of SasA, which then transfers its phosphate group to RpaA to activate it. In addition to its output function, recruits fold-shifted KaiB (KaiB(fs)) to KaiC to cooperatively form the KaiB(6):KaiC(6) complex (independent of SasA kinase activity). Required for robustness of the circadian rhythm of gene expression and is involved in clock output, also required for adaptation to light/dark cycles. Its function is as follows. Plays an important role in glucose metabolism, important for expression of genes involved in glycolysis, gluconeogenesis, the oxidative pentose phosphate pathway, and glycogen metabolism. Required for heterotrophic growth. Overexpression from the psbAII promoter leads to altered levels of genes involved in carbon metabolism, increased levels of transcripts for clock oscillator genes in the light and the dark, complete loss of glycogen accumulation, decreased levels of metabolites of sugar catabolism and increased levels of amino acids in the light and increased levels of SigE protein. The sequence is that of Adaptive-response sensory kinase SasA from Synechocystis sp. (strain ATCC 27184 / PCC 6803 / Kazusa).